The following is a 1706-amino-acid chain: 5'-3' exoribonuclease 1 (1706 aa).

A Phosphoserine modification is found at Ser1348. The tract at residues Glu1619 to Glu1706 is disordered. Residues Ala1623–Val1642 show a composition bias toward polar residues. A Phosphoserine modification is found at Ser1645. The segment covering Arg1647 to Ser1657 has biased composition (low complexity). Polar residues predominate over residues Pro1658 to Ser1676. Residues Ile1677–Lys1694 are compositionally biased toward basic residues.

The protein belongs to the 5'-3' exonuclease family. As to quaternary structure, found in a mRNP complex with UPF1, UPF2, UPF3B and XRN1. Associates with alpha and beta tubulins. Interacts with DIS3L2. Interacts with ZC3HAV1 in an RNA-dependent manner. Interacts with ZFP36L1. Interacts with TRIM71 (via NHL repeats) in an RNA-dependent manner. Interacts with YTHDC2 (via ANK repeats). Interacts with DHX34; the interaction is RNA-independent. In terms of tissue distribution, expressed in heart, brain, pancreas, spleen, testis, osteogenic sarcoma (OGS) biopsy and primary cell lines.

Its subcellular location is the cytoplasm. Functionally, major 5'-3' exoribonuclease involved in mRNA decay. Required for the 5'-3'-processing of the G4 tetraplex-containing DNA and RNA substrates. The kinetic of hydrolysis is faster for G4 RNA tetraplex than for G4 DNA tetraplex and monomeric RNA tetraplex. Binds to RNA and DNA. Plays a role in replication-dependent histone mRNA degradation. May act as a tumor suppressor protein in osteogenic sarcoma (OGS). The protein is 5'-3' exoribonuclease 1 of Homo sapiens (Human).